A 227-amino-acid polypeptide reads, in one-letter code: Ribonuclease 3 (227 aa).

The 123-residue stretch at 6-128 (ASDYQQRIGY…VIAAIYLDAD (123 aa)) folds into the RNase III domain. Mg(2+) is bound at residue Glu-41. Asp-45 is an active-site residue. Asp-114 and Glu-117 together coordinate Mg(2+). Glu-117 is an active-site residue. The 71-residue stretch at 155 to 225 (DPKTRLQEWL…ASHAINQLDS (71 aa)) folds into the DRBM domain. The segment covering 203–212 (GEGSSRRLAE) has biased composition (basic and acidic residues). Residues 203–227 (GEGSSRRLAEQDAASHAINQLDSNK) are disordered.

It belongs to the ribonuclease III family. Homodimer. Mg(2+) serves as cofactor.

It is found in the cytoplasm. It carries out the reaction Endonucleolytic cleavage to 5'-phosphomonoester.. Functionally, digests double-stranded RNA. Involved in the processing of primary rRNA transcript to yield the immediate precursors to the large and small rRNAs (23S and 16S). Processes some mRNAs, and tRNAs when they are encoded in the rRNA operon. Processes pre-crRNA and tracrRNA of type II CRISPR loci if present in the organism. In Xylella fastidiosa (strain M12), this protein is Ribonuclease 3.